We begin with the raw amino-acid sequence, 68 residues long: Large ribosomal subunit protein bL31 (68 aa).

Zn(2+) contacts are provided by cysteine 16, cysteine 18, cysteine 36, and cysteine 39.

This sequence belongs to the bacterial ribosomal protein bL31 family. Type A subfamily. Part of the 50S ribosomal subunit. Zn(2+) is required as a cofactor.

Its function is as follows. Binds the 23S rRNA. This chain is Large ribosomal subunit protein bL31, found in Dictyoglomus thermophilum (strain ATCC 35947 / DSM 3960 / H-6-12).